A 600-amino-acid polypeptide reads, in one-letter code: Elongation factor 4 (600 aa).

The tr-type G domain maps to S4–S186. Residues D16 to T21 and N133 to D136 contribute to the GTP site.

The protein belongs to the TRAFAC class translation factor GTPase superfamily. Classic translation factor GTPase family. LepA subfamily.

The protein localises to the cell membrane. The enzyme catalyses GTP + H2O = GDP + phosphate + H(+). Required for accurate and efficient protein synthesis under certain stress conditions. May act as a fidelity factor of the translation reaction, by catalyzing a one-codon backward translocation of tRNAs on improperly translocated ribosomes. Back-translocation proceeds from a post-translocation (POST) complex to a pre-translocation (PRE) complex, thus giving elongation factor G a second chance to translocate the tRNAs correctly. Binds to ribosomes in a GTP-dependent manner. The protein is Elongation factor 4 of Mycoplasma capricolum subsp. capricolum (strain California kid / ATCC 27343 / NCTC 10154).